The sequence spans 131 residues: Small ribosomal subunit protein uS8 (131 aa).

Belongs to the universal ribosomal protein uS8 family. Part of the 30S ribosomal subunit. Contacts proteins S5 and S12.

One of the primary rRNA binding proteins, it binds directly to 16S rRNA central domain where it helps coordinate assembly of the platform of the 30S subunit. This is Small ribosomal subunit protein uS8 from Mycoplasmopsis agalactiae (strain NCTC 10123 / CIP 59.7 / PG2) (Mycoplasma agalactiae).